Here is a 290-residue protein sequence, read N- to C-terminus: Ribosomal RNA small subunit methyltransferase A (290 aa).

N27, L29, G54, E75, D100, and N125 together coordinate S-adenosyl-L-methionine.

Belongs to the class I-like SAM-binding methyltransferase superfamily. rRNA adenine N(6)-methyltransferase family. RsmA subfamily.

Its subcellular location is the cytoplasm. It catalyses the reaction adenosine(1518)/adenosine(1519) in 16S rRNA + 4 S-adenosyl-L-methionine = N(6)-dimethyladenosine(1518)/N(6)-dimethyladenosine(1519) in 16S rRNA + 4 S-adenosyl-L-homocysteine + 4 H(+). In terms of biological role, specifically dimethylates two adjacent adenosines (A1518 and A1519) in the loop of a conserved hairpin near the 3'-end of 16S rRNA in the 30S particle. May play a critical role in biogenesis of 30S subunits. This is Ribosomal RNA small subunit methyltransferase A from Streptococcus pyogenes serotype M18 (strain MGAS8232).